Reading from the N-terminus, the 172-residue chain is 3-hydroxydecanoyl-[acyl-carrier-protein] dehydratase (172 aa).

The active site involves His-71.

The protein belongs to the thioester dehydratase family. FabA subfamily. As to quaternary structure, homodimer.

It is found in the cytoplasm. It catalyses the reaction a (3R)-hydroxyacyl-[ACP] = a (2E)-enoyl-[ACP] + H2O. It carries out the reaction (3R)-hydroxydecanoyl-[ACP] = (2E)-decenoyl-[ACP] + H2O. The catalysed reaction is (2E)-decenoyl-[ACP] = (3Z)-decenoyl-[ACP]. Its pathway is lipid metabolism; fatty acid biosynthesis. In terms of biological role, necessary for the introduction of cis unsaturation into fatty acids. Catalyzes the dehydration of (3R)-3-hydroxydecanoyl-ACP to E-(2)-decenoyl-ACP and then its isomerization to Z-(3)-decenoyl-ACP. Can catalyze the dehydratase reaction for beta-hydroxyacyl-ACPs with saturated chain lengths up to 16:0, being most active on intermediate chain length. This chain is 3-hydroxydecanoyl-[acyl-carrier-protein] dehydratase, found in Cronobacter sakazakii (strain ATCC BAA-894) (Enterobacter sakazakii).